The chain runs to 321 residues: Probable 2-oxoglutarate-dependent dioxygenase AOP1.2 (321 aa).

In terms of domain architecture, Fe2OG dioxygenase spans 165–270 (TYYLTRLMKY…RYSTGLFSIP (106 aa)). 3 residues coordinate Fe cation: His-194, Asp-196, and His-251. Arg-261 serves as a coordination point for 2-oxoglutarate.

The protein belongs to the iron/ascorbate-dependent oxidoreductase family. Requires Fe(2+) as cofactor.

Its function is as follows. Probable 2-oxoglutarate-dependent dioxygenase that may be involved in glucosinolates biosynthesis. May play a role in the production of aliphatic glucosinolates. The chain is Probable 2-oxoglutarate-dependent dioxygenase AOP1.2 (AOP1.2) from Arabidopsis thaliana (Mouse-ear cress).